The primary structure comprises 422 residues: MLELKFVRNNPDIVGRALISRNMGTELIDSLLEYDAAWRECLIEGDDLKHKRNVVTREIAQLKKENKDAASRINEMQGINSRIKELDDKIRDYKSKINEIMLSIPNIPSETTPVGKDENDNPVVRVVGEPREFTFTPKPHWEIGESLDILDFERAAKISGQGFAVYKGMGAKLERALINFMLDVHTRQGYLEVFPPVLINEKAMTGTGQLPKFKDDMYGCTDGFYLAPTAEVPVTNLFMDEYMENLPVFLTAYTACFRREAGKHGQDTRGIIRNHQFNKVELVKFVMPETSYEELEKLTLDAEEILKLLKLPYRVVSLCTGDLGFSAAKTYDLEVWVPTQEKYREISSCSNFDNFQARRANIRYRTPEGPQFVHTLNGSGLAVGRTVVAILENYQREDGSVEIPEVLRPYMGGAEEIRKVCH.

229–231 contacts L-serine; the sequence is TAE. 258-260 lines the ATP pocket; sequence RRE. E281 is an L-serine binding site. 345 to 348 serves as a coordination point for ATP; that stretch reads EISS. S379 is a binding site for L-serine.

It belongs to the class-II aminoacyl-tRNA synthetase family. Type-1 seryl-tRNA synthetase subfamily. Homodimer. The tRNA molecule binds across the dimer.

The protein localises to the cytoplasm. It carries out the reaction tRNA(Ser) + L-serine + ATP = L-seryl-tRNA(Ser) + AMP + diphosphate + H(+). The catalysed reaction is tRNA(Sec) + L-serine + ATP = L-seryl-tRNA(Sec) + AMP + diphosphate + H(+). The protein operates within aminoacyl-tRNA biosynthesis; selenocysteinyl-tRNA(Sec) biosynthesis; L-seryl-tRNA(Sec) from L-serine and tRNA(Sec): step 1/1. Functionally, catalyzes the attachment of serine to tRNA(Ser). Is also able to aminoacylate tRNA(Sec) with serine, to form the misacylated tRNA L-seryl-tRNA(Sec), which will be further converted into selenocysteinyl-tRNA(Sec). This Methanosarcina mazei (strain ATCC BAA-159 / DSM 3647 / Goe1 / Go1 / JCM 11833 / OCM 88) (Methanosarcina frisia) protein is Serine--tRNA ligase.